The sequence spans 163 residues: ATP synthase subunit b 1 (163 aa).

A helical membrane pass occupies residues 6–26 (LAELWVAVAFLLFVGILIYVG).

This sequence belongs to the ATPase B chain family. F-type ATPases have 2 components, F(1) - the catalytic core - and F(0) - the membrane proton channel. F(1) has five subunits: alpha(3), beta(3), gamma(1), delta(1), epsilon(1). F(0) has three main subunits: a(1), b(2) and c(10-14). The alpha and beta chains form an alternating ring which encloses part of the gamma chain. F(1) is attached to F(0) by a central stalk formed by the gamma and epsilon chains, while a peripheral stalk is formed by the delta and b chains.

The protein resides in the cell inner membrane. In terms of biological role, f(1)F(0) ATP synthase produces ATP from ADP in the presence of a proton or sodium gradient. F-type ATPases consist of two structural domains, F(1) containing the extramembraneous catalytic core and F(0) containing the membrane proton channel, linked together by a central stalk and a peripheral stalk. During catalysis, ATP synthesis in the catalytic domain of F(1) is coupled via a rotary mechanism of the central stalk subunits to proton translocation. Component of the F(0) channel, it forms part of the peripheral stalk, linking F(1) to F(0). The polypeptide is ATP synthase subunit b 1 (Xanthobacter autotrophicus (strain ATCC BAA-1158 / Py2)).